The sequence spans 128 residues: Protein C10 (128 aa).

Belongs to the UPF0456 family.

It localises to the cytoplasm. The protein is Protein C10 of Xenopus laevis (African clawed frog).